Consider the following 219-residue polypeptide: Ribose-5-phosphate isomerase A (219 aa).

Substrate contacts are provided by residues 28–31 (TGST), 81–84 (DGAD), and 94–97 (KGGG). E103 (proton acceptor) is an active-site residue. Residue K121 participates in substrate binding.

It belongs to the ribose 5-phosphate isomerase family. As to quaternary structure, homodimer.

It catalyses the reaction aldehydo-D-ribose 5-phosphate = D-ribulose 5-phosphate. The protein operates within carbohydrate degradation; pentose phosphate pathway; D-ribose 5-phosphate from D-ribulose 5-phosphate (non-oxidative stage): step 1/1. Its function is as follows. Catalyzes the reversible conversion of ribose-5-phosphate to ribulose 5-phosphate. In Nitrosomonas europaea (strain ATCC 19718 / CIP 103999 / KCTC 2705 / NBRC 14298), this protein is Ribose-5-phosphate isomerase A.